A 210-amino-acid polypeptide reads, in one-letter code: ATP-dependent Clp protease proteolytic subunit (210 aa).

S106 (nucleophile) is an active-site residue. The active site involves H131.

The protein belongs to the peptidase S14 family. Fourteen ClpP subunits assemble into 2 heptameric rings which stack back to back to give a disk-like structure with a central cavity, resembling the structure of eukaryotic proteasomes.

It is found in the cytoplasm. The catalysed reaction is Hydrolysis of proteins to small peptides in the presence of ATP and magnesium. alpha-casein is the usual test substrate. In the absence of ATP, only oligopeptides shorter than five residues are hydrolyzed (such as succinyl-Leu-Tyr-|-NHMec, and Leu-Tyr-Leu-|-Tyr-Trp, in which cleavage of the -Tyr-|-Leu- and -Tyr-|-Trp bonds also occurs).. Functionally, cleaves peptides in various proteins in a process that requires ATP hydrolysis. Has a chymotrypsin-like activity. Plays a major role in the degradation of misfolded proteins. The polypeptide is ATP-dependent Clp protease proteolytic subunit (Bartonella henselae (strain ATCC 49882 / DSM 28221 / CCUG 30454 / Houston 1) (Rochalimaea henselae)).